The chain runs to 206 residues: ATP phosphoribosyltransferase (206 aa).

It belongs to the ATP phosphoribosyltransferase family. Short subfamily. Heteromultimer composed of HisG and HisZ subunits.

The protein resides in the cytoplasm. It catalyses the reaction 1-(5-phospho-beta-D-ribosyl)-ATP + diphosphate = 5-phospho-alpha-D-ribose 1-diphosphate + ATP. It participates in amino-acid biosynthesis; L-histidine biosynthesis; L-histidine from 5-phospho-alpha-D-ribose 1-diphosphate: step 1/9. Functionally, catalyzes the condensation of ATP and 5-phosphoribose 1-diphosphate to form N'-(5'-phosphoribosyl)-ATP (PR-ATP). Has a crucial role in the pathway because the rate of histidine biosynthesis seems to be controlled primarily by regulation of HisG enzymatic activity. This Brachyspira hyodysenteriae (strain ATCC 49526 / WA1) protein is ATP phosphoribosyltransferase.